We begin with the raw amino-acid sequence, 854 residues long: DNA mismatch repair protein MutS (854 aa).

ATP is bound at residue 615–622 (GPNMGGKS).

It belongs to the DNA mismatch repair MutS family.

This protein is involved in the repair of mismatches in DNA. It is possible that it carries out the mismatch recognition step. This protein has a weak ATPase activity. This Aliivibrio fischeri (strain MJ11) (Vibrio fischeri) protein is DNA mismatch repair protein MutS.